The sequence spans 37 residues: Mu-cyrtautoxin-As1a (37 aa).

4 cysteine pairs are disulfide-bonded: C1–C15, C8–C19, C14–C35, and C26–C31.

Belongs to the neurotoxin 13 (insecticidal toxin ABC) family. 01 (Aps III) subfamily. Expressed by the venom gland.

It is found in the secreted. The recombinant mu-cyrtautoxin-As1a potently and voltage-independently blocks voltage-gated sodium channels (Nav) of insects. It acts by pluging the outer vestibule of the channel. It acts in combination with a weak (30%) voltage-independent block of insect voltage-gated calcium (Cav) channels (low-voltage and high-voltage channels). Tested on DUM neurons, it inhibits sodium currents with an IC(50) of 540 nM (and a Hill coefficient &gt;1, reflecting an incomplete block at higher concentrations). In vivo, it induces flaccid paralysis in adult Australian sheep blowfly Lucilia cuprina. It is both paralytic and lethal, when injected into lepidopteran larvae. It is a slower acting toxin, being lethal at 24 hours, but not paralytic at 1 hour post-injection. The protein is Mu-cyrtautoxin-As1a of Apomastus schlingeri (Trap-door spider).